The following is a 486-amino-acid chain: Deleted in azoospermia protein 3 (486 aa).

Residues 1–10 (MSAANPETPN) show a composition bias toward polar residues. The tract at residues 1-27 (MSAANPETPNSTISREASTQSSSAAAS) is disordered. Residues 11-27 (STISREASTQSSSAAAS) show a composition bias toward low complexity. Residues 40-115 (NTVFVGGIDA…KKLKLGPAIR (76 aa)) enclose the RRM domain. DAZ domains lie at 167–190 (AYSA…YNYQ), 191–214 (EYPT…YNYQ), 215–238 (PFPA…YNYQ), 239–262 (AFPA…YNYQ), 263–286 (PFPA…YNYQ), 287–310 (AFPA…YNYQ), 311–334 (AFPA…YNYQ), 335–358 (AFPA…YNYQ), 359–382 (AFPA…YNYQ), 383–406 (AFPA…YNYQ), 407–430 (AFPA…YNYQ), and 431–454 (AFPA…YNYQ).

This sequence belongs to the RRM DAZ family. In terms of assembly, forms a heterodimer with BOLL and DAZL. Interacts with PUM2, DAZAP1, DAZAP2, DZIP1 and DZIP3. In terms of tissue distribution, testis specific.

Its subcellular location is the cytoplasm. It localises to the nucleus. Its function is as follows. RNA-binding protein that plays an essential role in spermatogenesis. May act by binding to the 3'-UTR of mRNAs and regulating their translation. The protein is Deleted in azoospermia protein 3 (DAZ3) of Homo sapiens (Human).